The chain runs to 258 residues: Ciliogenesis and planar polarity effector 2 (258 aa).

Residues 50–258 (SIDTASYKIF…LPNPPESAPE (209 aa)) are small GTPase-like. The GTP site is built by S64, G65, G67, K68, T69, A70, V82, H84, T87, K176, D178, and S206.

The protein belongs to the small GTPase superfamily. Rab family. In terms of assembly, interacts with FUZ. Associates with the CPLANE (ciliogenesis and planar polarity effectors) complex via its interaction with FUZ.

It is found in the cytoplasm. It localises to the cytoskeleton. Its subcellular location is the cilium basal body. The protein localises to the microtubule organizing center. The protein resides in the centrosome. It is found in the centriole. Functionally, required for efficient primary cilia initiation, regulating a late step in cilia initiation. Plays a role in the final maturation of the mother centriole and ciliary vesicle that allows extension of the ciliary axoneme. The protein is Ciliogenesis and planar polarity effector 2 of Homo sapiens (Human).